We begin with the raw amino-acid sequence, 447 residues long: MDEEYDVIVLGTGLTECILSGIMSVNGKKVLHMDRNPYYGGESSSITPLEELYKRFQLLEGPPESMGRGRDWNVDLIPKFLMANGQLVKMLLYTEVTRYLDFKVVEGSFVYKGGKIYKVPSTETEALASNLMGMFEKRRFRKFLVFVANFDENDPKTFEGVDPQTTSMRDVYRKFDLGQDVIDFTGHALALYRTDDYLDQPCLETINRIKLYSESLARYGKSPYLYPLYGLGELPQGFARLSAIYGGTYMLNKPVDDIIMENGKVVGVKSEGEVARCKQLICDPSYIPDRVRKAGQVIRIICILSHPIKNTNDANSCQIIIPQNQVNRKSDIYVCMISYAHNVAAQGKYIAIASTTVETAEPEKEVEPALELLEPIDQKFVAISDLYEPIDDGSESQVFCSCSYDATTHFETTCNDIKDIYKRMAGSAFDFENMKRKQNDVFGEADQ.

Ser-427 is subject to Phosphoserine.

Belongs to the Rab GDI family. In terms of assembly, interacts with RHOH. Interacts with the non-phosphorylated forms of RAB1A, RAB3A, RAB5A, RAB5B, RAB5C, RAB8A, RAB8B, RAB10, RAB12, RAB35, and RAB43. In terms of tissue distribution, high expression in brain, lower in other tissues.

It is found in the cytoplasm. Its subcellular location is the golgi apparatus. The protein resides in the trans-Golgi network. Functionally, regulates the GDP/GTP exchange reaction of most Rab proteins by inhibiting the dissociation of GDP from them, and the subsequent binding of GTP to them. Promotes the dissociation of GDP-bound Rab proteins from the membrane and inhibits their activation. Promotes the dissociation of RAB1A, RAB3A, RAB5A and RAB10 from membranes. The polypeptide is Rab GDP dissociation inhibitor alpha (Gdi1) (Rattus norvegicus (Rat)).